Reading from the N-terminus, the 280-residue chain is Pre-mRNA-splicing factor PRP21 (280 aa).

An SURP motif 1 repeat occupies 11 to 49; that stretch reads DIKTTVNYIKQHGVEFENKLLEDERFSFIKKDDPLHEYY. The interval 53–72 is disordered; the sequence is MNEPTDTVSGEDNDRKSERE. The stretch at 95 to 135 is one SURP motif 2 repeat; that stretch reads VIKLTARYYAKDKSIVEQMISKDGEARLNFMNSSHPLHKTF. 2 stretches are compositionally biased toward basic and acidic residues: residues 246–261 and 269–280; these read EKIV…GDSK and AVGETRLKKSKK. Residues 246-280 are disordered; the sequence is EKIVSDQGKQKGGDSKGKKRKIRAVGETRLKKSKK.

Belongs to the CWC complex (or CEF1-associated complex), a spliceosome sub-complex reminiscent of a late-stage spliceosome composed of the U2, U5 and U6 snRNAs and at least BUD13, BUD31, BRR2, CDC40, CEF1, CLF1, CUS1, CWC2, CWC15, CWC21, CWC22, CWC23, CWC24, CWC25, CWC27, ECM2, HSH155, IST3, ISY1, LEA1, MSL1, NTC20, PRP8, PRP9, PRP11, PRP19, PRP21, PRP22, PRP45, PRP46, SLU7, SMB1, SMD1, SMD2, SMD3, SMX2, SMX3, SNT309, SNU114, SPP2, SYF1, SYF2, RSE1 and YJU2.

The protein localises to the nucleus. MRNA splicing factors, PRP9, PRP11, and PRP21, are necessary for binding of the U2 snRNP to the pre-mRNA in an early step of spliceosome assembly. This is Pre-mRNA-splicing factor PRP21 (PRP21) from Saccharomyces cerevisiae (strain ATCC 204508 / S288c) (Baker's yeast).